The following is a 398-amino-acid chain: Putative FBD-associated F-box protein At5g56700 (398 aa).

Residues 1–47 form the F-box domain; sequence MAKISDLSDELLVKILSFLPTKEAVSTSCLSKQWEFLWMWLSKLEFY. In terms of domain architecture, FBD spans 340 to 388; it reads WKNNKSSVPKCLLESLETFEFAGYIGTPEERDFLSYIFKHARCLKSSSI.

The polypeptide is Putative FBD-associated F-box protein At5g56700 (Arabidopsis thaliana (Mouse-ear cress)).